The primary structure comprises 399 residues: MKILYYDCFCGISGDMNLAALIDLGVPKEYLMEELSKVNLNSEYEMKIERSVKLGITGTRVDVKLNESSHGEEEHGHDHYHHHRKLKDIEKIINSSHLSDKVKNISLGMFMKIAEAEAKIHGKSLCEVHFHEVGAIDSIVDLVGAAICIDYLKVDRIIASPVQVGGGFVECSHGIIPVPAPATTEILKNIPISTGIVQFETTTPTGAAILAVNVEEFTSKIDFSIEKIGYGIGHRDLEIPNVLRVYLGEQERSEKVEEQYILETNIDDMNPEFYEYVQERLFEVGALDVFKTPIYMKKGRPGINLSVLISEKGEKDVLDVIFEETTSIGVRKHKVEKIMLNRDFSKVKTEYGDITVKKSYYKGKLVKYKPEYEECKAIAKEKNISIDKIYKVVYRQDLN.

Belongs to the LarC family.

It catalyses the reaction Ni(II)-pyridinium-3,5-bisthiocarboxylate mononucleotide = pyridinium-3,5-bisthiocarboxylate mononucleotide + Ni(2+). Its function is as follows. Involved in the biosynthesis of a nickel-pincer cofactor ((SCS)Ni(II) pincer complex). Binds Ni(2+), and functions in nickel delivery to pyridinium-3,5-bisthiocarboxylic acid mononucleotide (P2TMN), to form the mature cofactor. Is thus probably required for the activation of nickel-pincer cofactor-dependent enzymes. The polypeptide is Pyridinium-3,5-bisthiocarboxylic acid mononucleotide nickel insertion protein (Clostridium kluyveri (strain ATCC 8527 / DSM 555 / NBRC 12016 / NCIMB 10680 / K1)).